The following is a 345-amino-acid chain: Acetylserotonin O-methyltransferase (345 aa).

S-adenosyl-L-methionine contacts are provided by residues tyrosine 147, tryptophan 164, aspartate 210, 235–237, and arginine 252; that span reads GDF. Histidine 255 acts as the Proton donor/acceptor in catalysis. Residues aspartate 256, asparagine 302, and glutamine 306 each contribute to the substrate site.

It belongs to the class I-like SAM-binding methyltransferase superfamily. Cation-independent O-methyltransferase family. As to quaternary structure, homodimer. Highly expressed in pineal gland. In the retina, 10- to 100-fold lower expression compared to pineal gland, if any.

It catalyses the reaction N-acetylserotonin + S-adenosyl-L-methionine = melatonin + S-adenosyl-L-homocysteine + H(+). It functions in the pathway aromatic compound metabolism; melatonin biosynthesis; melatonin from serotonin: step 1/2. Its function is as follows. Catalyzes the transfer of a methyl group onto N-acetylserotonin, producing melatonin (N-acetyl-5-methoxytryptamine). This is Acetylserotonin O-methyltransferase (ASMT) from Macaca mulatta (Rhesus macaque).